The chain runs to 631 residues: Mu-like prophage FluMu protein gp42 (631 aa).

Transmembrane regions (helical) follow at residues 56–76 (LGNI…TMVG) and 385–405 (GLAD…PVYV). The segment at 425–453 (IEDGRDKDKKTQKKNKPPRPKRGRGSVRS) is disordered. Over residues 434–449 (KTQKKNKPPRPKRGRG) the composition is skewed to basic residues. Helical transmembrane passes span 455–475 (VAAV…VTTA), 495–515 (SKAV…TVLM), and 543–563 (ALIP…GWLG).

To phage Mu protein gp42.

The protein localises to the cell membrane. This is Mu-like prophage FluMu protein gp42 from Haemophilus influenzae (strain ATCC 51907 / DSM 11121 / KW20 / Rd).